A 146-amino-acid chain; its full sequence is UPF0260 protein SO_2573 (146 aa).

The protein belongs to the UPF0260 family.

The protein is UPF0260 protein SO_2573 of Shewanella oneidensis (strain ATCC 700550 / JCM 31522 / CIP 106686 / LMG 19005 / NCIMB 14063 / MR-1).